A 181-amino-acid chain; its full sequence is Transcriptional repressor NrdR (181 aa).

Residues 3–34 (CLFCQHTYTRVIDSRVSEDGATIRRRRECEAC) fold into a zinc finger. Residues 49–139 (PVIIKKDGGR…VYRSFQDVAD (91 aa)) form the ATP-cone domain.

Belongs to the NrdR family. Requires Zn(2+) as cofactor.

In terms of biological role, negatively regulates transcription of bacterial ribonucleotide reductase nrd genes and operons by binding to NrdR-boxes. The sequence is that of Transcriptional repressor NrdR from Xylella fastidiosa (strain 9a5c).